Reading from the N-terminus, the 415-residue chain is Protrudin (415 aa).

Positions 1 to 24 (MQTSDRDLSGPEASPSGMPEVLSE) are disordered. Topologically, residues 1 to 66 (MQTSDRDLSG…AGDGVRYLLR (66 aa)) are cytoplasmic. The segment at 1–92 (MQTSDRDLSG…LFLTLNEGAW (92 aa)) is sufficient for homooligomerization. Positions 1-210 (MQTSDRDLSG…LYLLPLCWVL (210 aa)) are sufficient for localization to endoplasmic reticulum tubular network and for interactions with REEP1, REEP5, ATL1, ATL2, ATL3 and SPAST. Residues 51–64 (LEPLKDAGDGVRYL) form a necessary for interaction with RAB11A and function in neurite outgrowth region. The chain crosses the membrane as a helical span at residues 67 to 87 (WQMPLCSLLTCLGLNILFLTL). Position 88 (Asn88) is a topological domain, lumenal. Residues 89–109 (EGAWYSMGALMISVPALLGYL) form a helical membrane-spanning segment. Residues 110 to 192 (QEVCRGQLPE…NPVVSSQFYG (83 aa)) lie on the Cytoplasmic side of the membrane. The helical intramembrane region spans 193–213 (ALLGMVCMLYLLPLCWVLALL). Residues 214-415 (NSTLFLGNGD…CASCNQTLSK (202 aa)) are Cytoplasmic-facing. Residues 254-290 (QGAGGRGLLDSSPAPTPTEDLTPGSVEEAEEAEPDEE) are disordered. The interval 275 to 365 (TPGSVEEAEE…GCAATFSVLK (91 aa)) is necessary for interaction with KIF5A. Over residues 280-290 (EEAEEAEPDEE) the composition is skewed to acidic residues. Residues 290 to 296 (EFKDAIE) form a necessary for interaction with VAPA region. Residues 348–414 (TNNFGNCAGC…VCASCNQTLS (67 aa)) form an FYVE-type zinc finger. 8 residues coordinate Zn(2+): Cys354, Cys357, Cys370, Cys373, Cys378, Cys381, Cys406, and Cys409.

Can form homooligomers (monomers, dimers and tetramers). Interacts with RAB11A (GDP-bound form); regulates RAB11A. Interacts with FKBP8; may negatively regulate ZFYVE27 phosphorylation. Isoform 1 interacts to a greater extent than isoform 2 with VAPB (via MSP domain). Isoform 1 interacts to a greater extent than isoform 2 with VAPA (via MSP domain). Interaction with VAPA may regulate ZFYVE27 retention in the endoplasmic reticulum and its function in cell projections formation. Interacts with ATL2, ATL3, SPAST and RTN3. Interacts with REEP1, REEP5 and ATL1. Interacts with RAB11B (GDP-bound form), SURF4, KIF5B and KIF5C. Isoform 1 and 2 interact with KIFA. Phosphorylated. Phosphorylation is induced by NGF through the MAPK/ERK pathway and modulates interaction with RAB11A. In terms of tissue distribution, astrocytes express both isoform 1 and isoform 2 and oligodendrocytes express only isoform 2 (at protein level). Isoform 1 is expressed specifically in the central nervous system and selectively in neuronal cells. Isoform 2 is expressed in cerebrum, cerebellum, spinal cord, heart, thymus, spleen, intestine and lung.

Its subcellular location is the recycling endosome membrane. It localises to the endoplasmic reticulum membrane. The protein localises to the cell projection. It is found in the growth cone membrane. Key regulator of RAB11-dependent vesicular trafficking during neurite extension through polarized membrane transport. Promotes axonal elongation and contributes to the establishment of neuronal cell polarity. Involved in nerve growth factor-induced neurite formation in VAPA-dependent manner. Contributes to both the formation and stabilization of the tubular ER network. Involved in ER morphogenesis by regulating the sheet-to-tubule balance and possibly the density of tubule interconnections. Acts as an adapter protein that facilitates the interaction of KIF5A with VAPA, VAPB, SURF4, RAB11A, RAB11B and RTN3 and the ZFYVE27-KIF5A complex contributes to the transport of these proteins in neurons. Can induce formation of neurite-like membrane protrusions in non-neuronal cells in a KIF5A/B-dependent manner. The chain is Protrudin (Zfyve27) from Mus musculus (Mouse).